Here is a 282-residue protein sequence, read N- to C-terminus: MGQIINGKEVALKIKEEIKTFVEERKKNKLRIPKIASILVGNDGGSIYYMSSQEKVANSLGVDFLKIILEENVTDDDVINEIHKLNDDVNVQGIMLQLPLPKHLNEKKIIKEISVKKDIDCLTFESQGKLYMGEKGFLPCTPNSVITLIKSLKIDITGKEVVVLGRSNIVGKPVAQLLLNENATVTICHSKTKDLKEVCSKADILVVAIGKPKFIDEEYIKENAIVIDVGTSSFEGKITGDVNFDKVIDKASFVTPVPGGVGALTTTLLIKNSCEALKEYED.

NADP(+) contacts are provided by residues 165–167, S190, and T231; that span reads GRS.

The protein belongs to the tetrahydrofolate dehydrogenase/cyclohydrolase family. Homodimer.

It carries out the reaction (6R)-5,10-methylene-5,6,7,8-tetrahydrofolate + NADP(+) = (6R)-5,10-methenyltetrahydrofolate + NADPH. The catalysed reaction is (6R)-5,10-methenyltetrahydrofolate + H2O = (6R)-10-formyltetrahydrofolate + H(+). Its pathway is one-carbon metabolism; tetrahydrofolate interconversion. In terms of biological role, catalyzes the oxidation of 5,10-methylenetetrahydrofolate to 5,10-methenyltetrahydrofolate and then the hydrolysis of 5,10-methenyltetrahydrofolate to 10-formyltetrahydrofolate. The polypeptide is Bifunctional protein FolD (Clostridium botulinum (strain Eklund 17B / Type B)).